Reading from the N-terminus, the 89-residue chain is Large ribosomal subunit protein bL27 (89 aa).

The disordered stretch occupies residues 1 to 20; it reads MAHKKAGGSSRNGRDSAGQR.

Belongs to the bacterial ribosomal protein bL27 family.

This is Large ribosomal subunit protein bL27 from Paramagnetospirillum magneticum (strain ATCC 700264 / AMB-1) (Magnetospirillum magneticum).